The primary structure comprises 195 residues: MSIFKRAKKTVLIPPPHLLSGDEERVTILSAEGEIKVTGRRPTTLEEKIYYSMNLAAAIVGGDLHPSFKSMTYLFQKEMEFGSTQEKVNFGSRKPAPQTTYQVTKAREVYLQTQPLEKKIPMQTYSVSTEGATITFTGRFLFSSSHVGCDDNRTKLAGLDGFTTSNSYQRVKDYYAQETALALTFAAPEKRGKEK.

Belongs to the novirhabdovirus matrix protein family. As to quaternary structure, homomultimer.

It localises to the virion. The protein localises to the host cytoplasm. Its function is as follows. The M protein has a crucial role in virus assembly and interacts with the RNP complex as well as with the viral membrane. This chain is Matrix protein (M), found in Salmo (IHNV).